Consider the following 227-residue polypeptide: Phosphoglycolate phosphatase (227 aa).

Catalysis depends on aspartate 8, which acts as the Nucleophile. Residues aspartate 8 and aspartate 10 each coordinate Mg(2+). Substrate is bound at residue lysine 152. Aspartate 175 and aspartate 179 together coordinate Mg(2+).

It belongs to the archaeal SPP-like hydrolase family. It depends on Mg(2+) as a cofactor.

It catalyses the reaction 2-phosphoglycolate + H2O = glycolate + phosphate. In terms of biological role, catalyzes the dephosphorylation of 2-phosphoglycolate. The chain is Phosphoglycolate phosphatase from Halorubrum lacusprofundi (strain ATCC 49239 / DSM 5036 / JCM 8891 / ACAM 34).